The sequence spans 145 residues: CASP-like protein SELMODRAFT_406854 (145 aa).

Residues 1–31 (MGVASQSSVANEAGAAPEASIQQTLRGFSSP) lie on the Cytoplasmic side of the membrane. Residues 32 to 52 (TSLLLRIATAVLCTLTLAFLV) form a helical membrane-spanning segment. Topologically, residues 53 to 75 (TSKERKEIASIDIVAIWSNSKAL) are extracellular. Residues 76–96 (IFLAVVSGICLGYSLLHAAVF) traverse the membrane as a helical segment. Residues 97–112 (LVMLSGNRKPLARKKA) lie on the Cytoplasmic side of the membrane. Residues 113-133 (LDWMVFLADQVFFKIFCWFSI) form a helical membrane-spanning segment. The Extracellular segment spans residues 134–145 (RVSSRRSKAGFV).

Belongs to the Casparian strip membrane proteins (CASP) family. Homodimer and heterodimers.

Its subcellular location is the cell membrane. The chain is CASP-like protein SELMODRAFT_406854 from Selaginella moellendorffii (Spikemoss).